The following is a 74-amino-acid chain: Mu-conotoxin-like T3.1 (74 aa).

The first 19 residues, 1–19 (MSKLGVLLTICLLLFPLTA), serve as a signal peptide directing secretion. A propeptide spanning residues 20–74 (LPMDGDEPADRPAERMQDNISSEQHPLFEERHGCCKGPEGCSSRECRPQHCCGRR) is cleaved from the precursor. Disulfide bonds link cysteine 53–cysteine 65, cysteine 54–cysteine 70, and cysteine 60–cysteine 71. A 4-hydroxyproline modification is found at proline 57. Residues glutamate 58 and glutamate 64 each carry the 4-carboxyglutamate modification. At proline 67 the chain carries 4-hydroxyproline. Cysteine 71 bears the Cysteine amide mark.

Belongs to the conotoxin M superfamily. Expressed by the venom duct.

Its subcellular location is the secreted. In terms of biological role, mu-conotoxins block voltage-gated sodium channels (Nav). In vitro, this synthetic peptide displays a low blocking effect in mouse extensor digitorum longus muscles (IC(50)=616 nM). In Conus tulipa (Fish-hunting cone snail), this protein is Mu-conotoxin-like T3.1.